A 488-amino-acid polypeptide reads, in one-letter code: Probable indole-3-acetic acid-amido synthetase GH3.6 (488 aa).

This sequence belongs to the IAA-amido conjugating enzyme family. As to expression, expressed in roots and callus.

May catalyze the synthesis of indole-3-acetic acid (IAA)-amino acid conjugates, providing a mechanism for the plant to cope with the presence of excess auxin. The polypeptide is Probable indole-3-acetic acid-amido synthetase GH3.6 (GH3.6) (Oryza sativa subsp. japonica (Rice)).